A 242-amino-acid polypeptide reads, in one-letter code: Biosynthetic peptidoglycan transglycosylase (242 aa).

Residues 19–39 (LMVVLAVFWGGGIALFSVAPV) form a helical membrane-spanning segment.

It belongs to the glycosyltransferase 51 family.

The protein localises to the cell inner membrane. It catalyses the reaction [GlcNAc-(1-&gt;4)-Mur2Ac(oyl-L-Ala-gamma-D-Glu-L-Lys-D-Ala-D-Ala)](n)-di-trans,octa-cis-undecaprenyl diphosphate + beta-D-GlcNAc-(1-&gt;4)-Mur2Ac(oyl-L-Ala-gamma-D-Glu-L-Lys-D-Ala-D-Ala)-di-trans,octa-cis-undecaprenyl diphosphate = [GlcNAc-(1-&gt;4)-Mur2Ac(oyl-L-Ala-gamma-D-Glu-L-Lys-D-Ala-D-Ala)](n+1)-di-trans,octa-cis-undecaprenyl diphosphate + di-trans,octa-cis-undecaprenyl diphosphate + H(+). It participates in cell wall biogenesis; peptidoglycan biosynthesis. Peptidoglycan polymerase that catalyzes glycan chain elongation from lipid-linked precursors. This Escherichia coli O139:H28 (strain E24377A / ETEC) protein is Biosynthetic peptidoglycan transglycosylase.